Consider the following 858-residue polypeptide: DNA mismatch repair protein MutS (858 aa).

637–644 provides a ligand contact to ATP; it reads GPNMAGKS.

It belongs to the DNA mismatch repair MutS family.

Its function is as follows. This protein is involved in the repair of mismatches in DNA. It is possible that it carries out the mismatch recognition step. This protein has a weak ATPase activity. The chain is DNA mismatch repair protein MutS from Protochlamydia amoebophila (strain UWE25).